A 254-amino-acid polypeptide reads, in one-letter code: 3-deoxy-manno-octulosonate cytidylyltransferase (254 aa).

It belongs to the KdsB family.

It is found in the cytoplasm. The enzyme catalyses 3-deoxy-alpha-D-manno-oct-2-ulosonate + CTP = CMP-3-deoxy-beta-D-manno-octulosonate + diphosphate. It functions in the pathway nucleotide-sugar biosynthesis; CMP-3-deoxy-D-manno-octulosonate biosynthesis; CMP-3-deoxy-D-manno-octulosonate from 3-deoxy-D-manno-octulosonate and CTP: step 1/1. Its pathway is bacterial outer membrane biogenesis; lipopolysaccharide biosynthesis. Activates KDO (a required 8-carbon sugar) for incorporation into bacterial lipopolysaccharide in Gram-negative bacteria. This is 3-deoxy-manno-octulosonate cytidylyltransferase from Pseudomonas aeruginosa (strain LESB58).